We begin with the raw amino-acid sequence, 470 residues long: ATP synthase subunit beta 2 (470 aa).

Residue 155–162 (GGAGVGKT) coordinates ATP.

Belongs to the ATPase alpha/beta chains family. In terms of assembly, F-type ATPases have 2 components, CF(1) - the catalytic core - and CF(0) - the membrane proton channel. CF(1) has five subunits: alpha(3), beta(3), gamma(1), delta(1), epsilon(1). CF(0) has three main subunits: a(1), b(2) and c(9-12). The alpha and beta chains form an alternating ring which encloses part of the gamma chain. CF(1) is attached to CF(0) by a central stalk formed by the gamma and epsilon chains, while a peripheral stalk is formed by the delta and b chains.

It localises to the cell inner membrane. The enzyme catalyses ATP + H2O + 4 H(+)(in) = ADP + phosphate + 5 H(+)(out). In terms of biological role, produces ATP from ADP in the presence of a proton gradient across the membrane. The catalytic sites are hosted primarily by the beta subunits. The chain is ATP synthase subunit beta 2 from Nitrosospira multiformis (strain ATCC 25196 / NCIMB 11849 / C 71).